Here is a 372-residue protein sequence, read N- to C-terminus: Aminomethyltransferase (372 aa).

The protein belongs to the GcvT family. The glycine cleavage system is composed of four proteins: P, T, L and H.

The catalysed reaction is N(6)-[(R)-S(8)-aminomethyldihydrolipoyl]-L-lysyl-[protein] + (6S)-5,6,7,8-tetrahydrofolate = N(6)-[(R)-dihydrolipoyl]-L-lysyl-[protein] + (6R)-5,10-methylene-5,6,7,8-tetrahydrofolate + NH4(+). Its function is as follows. The glycine cleavage system catalyzes the degradation of glycine. The chain is Aminomethyltransferase from Synechocystis sp. (strain ATCC 27184 / PCC 6803 / Kazusa).